We begin with the raw amino-acid sequence, 347 residues long: Ribosomal RNA small subunit methyltransferase H (347 aa).

S-adenosyl-L-methionine contacts are provided by residues 50–52 (GGH), Asp69, Phe96, Asp125, and Gln132.

Belongs to the methyltransferase superfamily. RsmH family.

Its subcellular location is the cytoplasm. The catalysed reaction is cytidine(1402) in 16S rRNA + S-adenosyl-L-methionine = N(4)-methylcytidine(1402) in 16S rRNA + S-adenosyl-L-homocysteine + H(+). In terms of biological role, specifically methylates the N4 position of cytidine in position 1402 (C1402) of 16S rRNA. The protein is Ribosomal RNA small subunit methyltransferase H of Corynebacterium aurimucosum (strain ATCC 700975 / DSM 44827 / CIP 107346 / CN-1) (Corynebacterium nigricans).